We begin with the raw amino-acid sequence, 345 residues long: CRISPR-associated endonuclease Cas1 1 (345 aa).

A divalent metal cation contacts are provided by Glu168, His239, and Glu254.

This sequence belongs to the CRISPR-associated endonuclease Cas1 family. In terms of assembly, forms a heterotetramer with a Cas2 homodimer. Homodimer. A divalent metal cation serves as cofactor.

Its function is as follows. CRISPR (clustered regularly interspaced short palindromic repeat), is an adaptive immune system that provides protection against mobile genetic elements (viruses, transposable elements and conjugative plasmids). CRISPR clusters contain sequences complementary to antecedent mobile elements and target invading nucleic acids. CRISPR clusters are transcribed and processed into CRISPR RNA (crRNA). Involved in the integration of spacer DNA into the CRISPR cassette. Acts as a dsDNA and ssRNA nuclease, binds to linear and circular dsDNA and linear ssRNA and ssDNA. The protein is CRISPR-associated endonuclease Cas1 1 of Archaeoglobus fulgidus (strain ATCC 49558 / DSM 4304 / JCM 9628 / NBRC 100126 / VC-16).